Reading from the N-terminus, the 329-residue chain is GTP 3',8-cyclase (329 aa).

A Radical SAM core domain is found at 1-229 (MNQIDYLRIS…EGQVRGNGPA (229 aa)). R8 provides a ligand contact to GTP. [4Fe-4S] cluster is bound by residues C15 and C19. Y21 is an S-adenosyl-L-methionine binding site. [4Fe-4S] cluster is bound at residue C22. R60 contacts GTP. An S-adenosyl-L-methionine-binding site is contributed by G64. GTP is bound at residue T91. S115 serves as a coordination point for S-adenosyl-L-methionine. Residue K155 coordinates GTP. M189 is a binding site for S-adenosyl-L-methionine. [4Fe-4S] cluster contacts are provided by C252 and C255. 257–259 (RLR) is a GTP binding site. Residue C269 coordinates [4Fe-4S] cluster.

The protein belongs to the radical SAM superfamily. MoaA family. As to quaternary structure, monomer and homodimer. Requires [4Fe-4S] cluster as cofactor.

The catalysed reaction is GTP + AH2 + S-adenosyl-L-methionine = (8S)-3',8-cyclo-7,8-dihydroguanosine 5'-triphosphate + 5'-deoxyadenosine + L-methionine + A + H(+). Its pathway is cofactor biosynthesis; molybdopterin biosynthesis. Functionally, catalyzes the cyclization of GTP to (8S)-3',8-cyclo-7,8-dihydroguanosine 5'-triphosphate. In Microcystis aeruginosa (strain NIES-843 / IAM M-2473), this protein is GTP 3',8-cyclase.